The sequence spans 91 residues: Small ribosomal subunit protein uS19 (91 aa).

Belongs to the universal ribosomal protein uS19 family.

In terms of biological role, protein S19 forms a complex with S13 that binds strongly to the 16S ribosomal RNA. The sequence is that of Small ribosomal subunit protein uS19 from Pseudomonas fluorescens (strain SBW25).